The sequence spans 289 residues: MNPMDRQTEGQEPQHQDRQPGIESKMNPLPLSEDEDYRGSGKLKGKVAIITGGDSGIGRAAAIAFAKEGADISILYLDEHSDAEETRKRIEKENVRCLLIPGDVGDENHCEQAVQQTVDHFGKLDILVNNAAEQHPQDSILNISTEQLEKTFRTNIFSMFHMTKKALPHLQEGCAIINTTSITAYEGDTALIDYSSTKGAIVSFTRSMAKSLADKGIRVNAVAPGPIWTPLIPATFPEEKVKQHGLDTPMGRPGQPVEHAGAYVLLASDESSYMTGQTIHVNGGRFIST.

Residues 1 to 20 (MNPMDRQTEGQEPQHQDRQP) show a composition bias toward basic and acidic residues. Residues 1–39 (MNPMDRQTEGQEPQHQDRQPGIESKMNPLPLSEDEDYRG) form a disordered region. 49-73 (IITGGDSGIGRAAAIAFAKEGADIS) is an NADP(+) binding site. Ser181 is a substrate binding site. Tyr194 acts as the Proton acceptor in catalysis.

It belongs to the short-chain dehydrogenases/reductases (SDR) family.

This is an uncharacterized protein from Bacillus subtilis (strain 168).